Here is a 360-residue protein sequence, read N- to C-terminus: Protein phosphatase 1 regulatory subunit 7 (360 aa).

The disordered stretch occupies residues 1-64; that stretch reads MAAERGAGQQ…GEEDPEEEHE (64 aa). At A2 the chain carries N-acetylalanine. 5 positions are modified to phosphoserine: S12, S24, S27, S44, and S47. Positions 17–34 are enriched in basic and acidic residues; it reads EVDRRVESEESGDEEGKK. Acidic residues predominate over residues 53–63; the sequence is ERGEEDPEEEH. LRR repeat units lie at residues 77–98, 99–120, 121–142, 143–164, 165–186, 187–208, 209–230, 231–252, 253–274, 275–296, and 297–318; these read DAED…EVLK, KVKT…EELQ, SLRE…EALT, ELEI…DKLT, RLKK…SNLH, QLQM…DTLT, NLES…DALT, NLTV…QNLV, NLRE…ENNN, KLTM…SHLT, and ELQE…DELK. Phosphoserine is present on S322. An LRRCT domain is found at 331 to 360; the sequence is NPLQKDPQYRRKVMLALPSVRQIDATFVRF.

Belongs to the SDS22 family. As to quaternary structure, interacts with PPP1CA, PPP1CB and PPP1CC/PPP1G isoform 1. As to expression, widely expressed.

It is found in the nucleus. In terms of biological role, regulatory subunit of protein phosphatase 1. The protein is Protein phosphatase 1 regulatory subunit 7 (PPP1R7) of Homo sapiens (Human).